We begin with the raw amino-acid sequence, 673 residues long: Beta-galactosidase GalA (673 aa).

R105 serves as a coordination point for substrate. Zn(2+) is bound at residue C109. Position 143 (N143) interacts with substrate. The Proton donor role is filled by E144. Residues C149, C151, and C154 each contribute to the Zn(2+) site. E308 (nucleophile) is an active-site residue. Residues W316 and 356 to 359 each bind substrate; that span reads EKFH.

Belongs to the glycosyl hydrolase 42 family. As to quaternary structure, homodimer.

It catalyses the reaction Hydrolysis of terminal non-reducing beta-D-galactose residues in beta-D-galactosides.. Inhibited by hydrolysis end products D-galactose and D-glucose. The hydrolysis of o-nitrophenyl-beta-D-galactopyranoside (ONPG) is slightly activated by monovalent ions, Na(+) and K(+). Concentrations of these ions in the range of 1-100 mM exert the stimulating effects. The presence of 1 mM Mn(2+) together with the presence of 10 mM Na(+) slightly stimulates the activity, while presence of 10 mM Mn(2+) inhibits the activity by about 40%. Functionally, catalyzes the hydrolysis of lactose to its constituent monosaccharides glucose and galactose. Possesses a low level of transgalactosylation activity for the production of galacto-oligosaccharides (GOS) from lactose. This is Beta-galactosidase GalA from Bacillus licheniformis (strain ATCC 14580 / DSM 13 / JCM 2505 / CCUG 7422 / NBRC 12200 / NCIMB 9375 / NCTC 10341 / NRRL NRS-1264 / Gibson 46).